The sequence spans 144 residues: Effector EagT6 (144 aa).

As to quaternary structure, homodimer. Two dimers interact with Tse6; this interaction is crucial for Tse6 loading onto VgrG1a.

Its function is as follows. Plays an essential role in toxin Tse6 delivery to target cells and specifically in the loading of Tse6 onto VgrG1a. The sequence is that of Effector EagT6 from Pseudomonas aeruginosa (strain ATCC 15692 / DSM 22644 / CIP 104116 / JCM 14847 / LMG 12228 / 1C / PRS 101 / PAO1).